The primary structure comprises 352 residues: Methylthioribose-1-phosphate isomerase (352 aa).

Residues 55-57, Arg-98, and Gln-201 each bind substrate; that span reads RGA. Asp-242 acts as the Proton donor in catalysis. 252–253 is a substrate binding site; it reads NK.

This sequence belongs to the eIF-2B alpha/beta/delta subunits family. MtnA subfamily.

The enzyme catalyses 5-(methylsulfanyl)-alpha-D-ribose 1-phosphate = 5-(methylsulfanyl)-D-ribulose 1-phosphate. It participates in amino-acid biosynthesis; L-methionine biosynthesis via salvage pathway; L-methionine from S-methyl-5-thio-alpha-D-ribose 1-phosphate: step 1/6. Functionally, catalyzes the interconversion of methylthioribose-1-phosphate (MTR-1-P) into methylthioribulose-1-phosphate (MTRu-1-P). This Methylococcus capsulatus (strain ATCC 33009 / NCIMB 11132 / Bath) protein is Methylthioribose-1-phosphate isomerase.